The following is a 275-amino-acid chain: NH(3)-dependent NAD(+) synthetase (275 aa).

Position 46 to 53 (46 to 53 (GISGGQDS)) interacts with ATP. Position 52 (aspartate 52) interacts with Mg(2+). Arginine 140 contributes to the deamido-NAD(+) binding site. Residue threonine 160 participates in ATP binding. Glutamate 165 lines the Mg(2+) pocket. Positions 173 and 180 each coordinate deamido-NAD(+). Residues lysine 189 and threonine 211 each coordinate ATP. 260–261 (HK) is a binding site for deamido-NAD(+).

Belongs to the NAD synthetase family. Homodimer.

It carries out the reaction deamido-NAD(+) + NH4(+) + ATP = AMP + diphosphate + NAD(+) + H(+). Its pathway is cofactor biosynthesis; NAD(+) biosynthesis; NAD(+) from deamido-NAD(+) (ammonia route): step 1/1. Catalyzes the ATP-dependent amidation of deamido-NAD to form NAD. Uses ammonia as a nitrogen source. The protein is NH(3)-dependent NAD(+) synthetase of Shigella boydii serotype 18 (strain CDC 3083-94 / BS512).